The chain runs to 271 residues: uncharacterized protein (271 aa).

The region spanning 24–124 (PIILLVHGGG…QVHVMIPHEP (101 aa)) is the AB hydrolase-1 domain.

This sequence belongs to the AB hydrolase superfamily.

This is an uncharacterized protein from Bacillus subtilis (strain 168).